We begin with the raw amino-acid sequence, 354 residues long: UPF0283 membrane protein HI_0043 (354 aa).

3 helical membrane passes run 57–77, 87–107, and 211–231; these read LLKF…VQWI, IYLA…KEII, and ESAV…FIAW.

The protein belongs to the UPF0283 family.

Its subcellular location is the cell inner membrane. In Haemophilus influenzae (strain ATCC 51907 / DSM 11121 / KW20 / Rd), this protein is UPF0283 membrane protein HI_0043.